We begin with the raw amino-acid sequence, 279 residues long: NH(3)-dependent NAD(+) synthetase (279 aa).

An ATP-binding site is contributed by 39-46 (GLSGGIDS). D45 lines the Mg(2+) pocket. R122 is a deamido-NAD(+) binding site. ATP is bound at residue T142. E147 provides a ligand contact to Mg(2+). Deamido-NAD(+)-binding residues include K155 and D162. Positions 171 and 193 each coordinate ATP. 253–254 (HK) contributes to the deamido-NAD(+) binding site.

The protein belongs to the NAD synthetase family. In terms of assembly, homodimer.

It carries out the reaction deamido-NAD(+) + NH4(+) + ATP = AMP + diphosphate + NAD(+) + H(+). It functions in the pathway cofactor biosynthesis; NAD(+) biosynthesis; NAD(+) from deamido-NAD(+) (ammonia route): step 1/1. Catalyzes the ATP-dependent amidation of deamido-NAD to form NAD. Uses ammonia as a nitrogen source. This is NH(3)-dependent NAD(+) synthetase from Sulfolobus acidocaldarius (strain ATCC 33909 / DSM 639 / JCM 8929 / NBRC 15157 / NCIMB 11770).